The sequence spans 687 residues: Protein white (687 aa).

Residues 1–30 (MGQEDQELLIRGGSKHPSAEHLNNGDSGAA) are disordered. The Cytoplasmic segment spans residues 1–419 (MGQEDQELLI…FMQFRAVLWR (419 aa)). Positions 93–341 (NRTRGLFCNE…FSYVGAQCPT (249 aa)) constitute an ABC transporter domain. An ATP-binding site is contributed by 130–137 (GSSGAGKT). The helical transmembrane segment at 420–440 (SWLSVLKEPLLVKVRLIQTTM) threads the bilayer. Residues 441–460 (VAILIGLIFLGQQLTQVGVM) are Extracellular-facing. Residues 461-481 (NINGAIFLFLTNMTFQNVFAT) traverse the membrane as a helical segment. At 482–497 (INVFTSELPVFMREAR) the chain is on the cytoplasmic side. A helical transmembrane segment spans residues 498–518 (SRLYRCDTYFLGKTIAELPLF). Topologically, residues 519–531 (LTVPLVFTAIAYP) are extracellular. Residues 532-552 (MIGLRAGVLHFFNCLALVTLV) form a helical membrane-spanning segment. At 553 to 568 (ANVSTSFGYLISCASS) the chain is on the cytoplasmic side. Residues 569 to 589 (STSMALSVGPPVIIPFLLFGG) form a helical membrane-spanning segment. The Extracellular segment spans residues 590-644 (FFLNSGSVPVYLKWLSYLSWFRYANEGLLINQWADVEPGEISCTSSNTTCPSSGK). Asn636 carries an N-linked (GlcNAc...) asparagine glycan. The helical transmembrane segment at 645 to 665 (VILETLNFSAADLPLDYVGLA) threads the bilayer. The Cytoplasmic portion of the chain corresponds to 666-675 (ILIVSFRVLA).

Belongs to the ABC transporter superfamily. ABCG family. Eye pigment precursor importer (TC 3.A.1.204) subfamily. May form a heterodimer with bw/brown. May form a heterodimer with st/scarlet. As to expression, expressed in the head (at protein level). Expressed in the eye, specifically in retina primary pigment cells, in the basement membrane of the base of secondary and tertiary pigment cells, and in retinula cells (at protein level). Expressed in the retina underlying lamina in the epithelial glia that surrounds the array of lamina cartridges (at protein level). Weakly expressed in photoreceptors, specifically in terminals of R1-R6, R7 and R8 (at protein level). Expressed at very low levels in medulla and central brain (at protein level). Expressed in principal cells of the Malpighian tubules.

It is found in the cytoplasmic vesicle membrane. The enzyme catalyses 3',5'-cyclic GMP(in) + ATP + H2O = 3',5'-cyclic GMP(out) + ADP + phosphate + H(+). The catalysed reaction is guanine(out) + ATP + H2O = guanine(in) + ADP + phosphate + H(+). It carries out the reaction riboflavin(in) + ATP + H2O = riboflavin(out) + ADP + phosphate + H(+). It catalyses the reaction (6S)-5,6,7,8-tetrahydrofolate(out) + ATP + H2O = (6S)-5,6,7,8-tetrahydrofolate(in) + ADP + phosphate + H(+). The enzyme catalyses L-tryptophan(out) + ATP + H2O = L-tryptophan(in) + ADP + phosphate + H(+). The catalysed reaction is L-kynurenine(out) + ATP + H2O = L-kynurenine(in) + ADP + phosphate + H(+). It carries out the reaction xanthine(out) + ATP + H2O = xanthine(in) + ADP + phosphate + H(+). In terms of biological role, ATP-dependent transporter of the ATP-binding cassette (ABC) family which transports various molecules including bioamines, neurotransmitters, metabolic intermediates and second messengers. In the eye, required for the transport of the eye red and brown pigment precursors, guanine and tryptophan, into pigment cell granules. Probably in association with bw/brown, involved in the transport of guanine. Probably in association with st/scarlet involved in the transport of kynurenine and probably tryptophan. Involved in the transport of kynurenine in pupal eyes. May play a role in histamine uptake by the lamina epithelial glia which surrounds photoreceptors R1-R6. In Malpighian tubules, involved in the transport of cGMP, guanine, xanthine, riboflavin, kynurenine and tryptophan. Probably in association with br/brown, involved in aging-induced intestinal stem cell proliferation in the midgut by regulating tetrahydrofolate transport. Probably in association with st/scarlet, plays a role in zinc storage granule biogenesis in Malpighian tubule principal epithelial cells. The protein is Protein white of Drosophila melanogaster (Fruit fly).